Reading from the N-terminus, the 509-residue chain is Tyrosine-protein kinase STK (509 aa).

Residues 1 to 16 are compositionally biased toward polar residues; it reads MGPCCSKQTKALNNQP. The interval 1-23 is disordered; it reads MGPCCSKQTKALNNQPDKSKSKD. A lipid anchor (N-myristoyl glycine) is attached at Gly2. Residues 59–120 form the SH3 domain; that stretch reads PGVTIFVALY…PSTYVAPEKS (62 aa). Positions 126-218 constitute an SH2 domain; that stretch reads WYFGDVKRAE…GLVCALTLPC (93 aa). A Protein kinase domain is found at 240–495; sequence LRLNRKLGAG…LQGVLEDYFV (256 aa). ATP-binding positions include 246–254 and Lys268; that span reads LGAGQFGEV. Catalysis depends on Asp360, which acts as the Proton acceptor. Tyr390 carries the post-translational modification Phosphotyrosine; by autocatalysis.

Belongs to the protein kinase superfamily. Tyr protein kinase family. SRC subfamily.

It carries out the reaction L-tyrosyl-[protein] + ATP = O-phospho-L-tyrosyl-[protein] + ADP + H(+). In Hydra vulgaris (Hydra), this protein is Tyrosine-protein kinase STK (STK).